We begin with the raw amino-acid sequence, 704 residues long: DNA ligase (704 aa).

Residues Asp58 to Asp62, Ser107 to Leu108, and Glu138 each bind NAD(+). The active-site N6-AMP-lysine intermediate is Lys140. Residues Arg161, Glu199, Lys323, and Lys347 each coordinate NAD(+). Cys441, Cys444, Cys459, and Cys464 together coordinate Zn(2+). The BRCT domain occupies Glu621 to Glu704.

Belongs to the NAD-dependent DNA ligase family. LigA subfamily. The cofactor is Mg(2+). Mn(2+) is required as a cofactor.

It carries out the reaction NAD(+) + (deoxyribonucleotide)n-3'-hydroxyl + 5'-phospho-(deoxyribonucleotide)m = (deoxyribonucleotide)n+m + AMP + beta-nicotinamide D-nucleotide.. Its function is as follows. DNA ligase that catalyzes the formation of phosphodiester linkages between 5'-phosphoryl and 3'-hydroxyl groups in double-stranded DNA using NAD as a coenzyme and as the energy source for the reaction. It is essential for DNA replication and repair of damaged DNA. The chain is DNA ligase from Sulfurihydrogenibium sp. (strain YO3AOP1).